The following is an 84-amino-acid chain: Small ribosomal subunit protein uS17 (84 aa).

Belongs to the universal ribosomal protein uS17 family. In terms of assembly, part of the 30S ribosomal subunit.

In terms of biological role, one of the primary rRNA binding proteins, it binds specifically to the 5'-end of 16S ribosomal RNA. In Serratia proteamaculans (strain 568), this protein is Small ribosomal subunit protein uS17.